We begin with the raw amino-acid sequence, 177 residues long: Prorelaxin (177 aa).

A signal peptide spans 1–22; the sequence is MSCKFVLQLLGFWLLLSQPCRA. 3 cysteine pairs are disulfide-bonded: Cys36-Cys164, Cys48-Cys177, and Cys163-Cys168. The propeptide at 64 to 149 is connecting peptide; the sequence is MTEEAVSSFI…LKSLYLDTLS (86 aa). Residues 80–114 form a disordered region; sequence FDTMPNLSEKPKTALPEGHPSLPEQQQYVPVSSDS. Over residues 102-114 the composition is skewed to polar residues; the sequence is PEQQQYVPVSSDS.

This sequence belongs to the insulin family. As to quaternary structure, heterodimer of a B chain and an A chain linked by two disulfide bonds.

It is found in the secreted. In terms of biological role, relaxin is an ovarian hormone that acts with estrogen to produce dilatation of the birth canal in many mammals. It bears mature young, and allows separation of the pelvic bones. This is Prorelaxin (RLN) from Mesocricetus auratus (Golden hamster).